The following is a 60-amino-acid chain: Cytotoxin 1 (60 aa).

4 disulfides stabilise this stretch: cysteine 3-cysteine 21, cysteine 14-cysteine 38, cysteine 42-cysteine 53, and cysteine 54-cysteine 59.

This sequence belongs to the three-finger toxin family. Short-chain subfamily. Type IA cytotoxin sub-subfamily. In terms of assembly, monomer in solution; Homodimer and oligomer in the presence of negatively charged lipids forming a pore with a size ranging between 20 and 30 Angstroms. In terms of tissue distribution, expressed by the venom gland.

Its subcellular location is the secreted. It localises to the target cell membrane. Its function is as follows. Shows cytolytic activity on many different cells by forming pore in lipid membranes. In vivo, increases heart rate or kills the animal by cardiac arrest. In addition, it binds to heparin with high affinity, interacts with Kv channel-interacting protein 1 (KCNIP1) in a calcium-independent manner, and binds to integrin alpha-V/beta-3 (ITGAV/ITGB3) with moderate affinity. The chain is Cytotoxin 1 from Naja mossambica (Mozambique spitting cobra).